Consider the following 233-residue polypeptide: Pre-mRNA-splicing factor syf-2 (233 aa).

Positions M1 to S16 are enriched in polar residues. Disordered regions lie at residues M1–G80 and V95–M119. A compositionally biased stretch (basic and acidic residues) spans K17–G80. Residues M18–E77 adopt a coiled-coil conformation.

Belongs to the SYF2 family. In terms of assembly, may be part of a spliceosome complex.

Its subcellular location is the nucleus. In terms of biological role, may be involved in pre-mRNA splicing. This chain is Pre-mRNA-splicing factor syf-2, found in Caenorhabditis briggsae.